Here is a 92-residue protein sequence, read N- to C-terminus: Large ribosomal subunit protein eL43 (92 aa).

The C4-type zinc-finger motif lies at 39–60; it reads CSFCGKKTVRRGAAGIWSCHSC.

The protein belongs to the eukaryotic ribosomal protein eL43 family.

The polypeptide is Large ribosomal subunit protein eL43 (RPL43) (Candida glabrata (strain ATCC 2001 / BCRC 20586 / JCM 3761 / NBRC 0622 / NRRL Y-65 / CBS 138) (Yeast)).